Reading from the N-terminus, the 405-residue chain is Adenylosuccinate synthetase (405 aa).

GTP is bound by residues 12-18 and 40-42; these read GDEGKGK and GHT. Residue aspartate 13 is the Proton acceptor of the active site. Mg(2+) is bound by residues aspartate 13 and glycine 40. Residues 13-16, 38-41, threonine 121, arginine 135, glutamine 213, threonine 228, and arginine 297 each bind IMP; these read DEGK and NAGH. Histidine 41 functions as the Proton donor in the catalytic mechanism. Position 293 to 299 (293 to 299) interacts with substrate; that stretch reads TTTGRPR. GTP contacts are provided by residues arginine 299, 325-327, and 390-392; these read KMD and SAG.

The protein belongs to the adenylosuccinate synthetase family. Homodimer. It depends on Mg(2+) as a cofactor.

Its subcellular location is the cytoplasm. It catalyses the reaction IMP + L-aspartate + GTP = N(6)-(1,2-dicarboxyethyl)-AMP + GDP + phosphate + 2 H(+). It participates in purine metabolism; AMP biosynthesis via de novo pathway; AMP from IMP: step 1/2. In terms of biological role, plays an important role in the de novo pathway of purine nucleotide biosynthesis. Catalyzes the first committed step in the biosynthesis of AMP from IMP. The sequence is that of Adenylosuccinate synthetase from Deinococcus radiodurans (strain ATCC 13939 / DSM 20539 / JCM 16871 / CCUG 27074 / LMG 4051 / NBRC 15346 / NCIMB 9279 / VKM B-1422 / R1).